Consider the following 587-residue polypeptide: Probable pectinesterase/pectinesterase inhibitor 61 (587 aa).

The tract at residues 1–23 is disordered; sequence MGYDRLGPSGPSNPNQKDPATSL. A compositionally biased stretch (polar residues) spans 10–19; it reads GPSNPNQKDP. Residues 35–55 traverse the membrane as a helical segment; it reads ILFTLAVLVVGVVCFGIFAGI. The segment at 69 to 223 is pectinesterase inhibitor 61; it reads RKPTQAISRT…SEMVSNCLAI (155 aa). The tract at residues 273-571 is pectinesterase 61; sequence DITVSKDGSG…FTVAQFISGS (299 aa). Residues T349 and Q379 each contribute to the substrate site. D402 acts as the Proton donor; for pectinesterase activity in catalysis. A disulfide bond links C416 and C436. D423 (nucleophile; for pectinesterase activity) is an active-site residue. Positions 491 and 493 each coordinate substrate.

The protein in the N-terminal section; belongs to the PMEI family. This sequence in the C-terminal section; belongs to the pectinesterase family. Expressed in siliques, floral stems and rosettes leaves.

It is found in the membrane. It carries out the reaction [(1-&gt;4)-alpha-D-galacturonosyl methyl ester](n) + n H2O = [(1-&gt;4)-alpha-D-galacturonosyl](n) + n methanol + n H(+). The protein operates within glycan metabolism; pectin degradation; 2-dehydro-3-deoxy-D-gluconate from pectin: step 1/5. Its function is as follows. Acts in the modification of cell walls via demethylesterification of cell wall pectin. This chain is Probable pectinesterase/pectinesterase inhibitor 61 (PME61), found in Arabidopsis thaliana (Mouse-ear cress).